Consider the following 360-residue polypeptide: MTATLQRRESASLWERFCSWITSTENRLYIGWFGVLMIPTLLTATSVFIIAFVAAPPVDIDGIREPVAGSLLYGNNIISGAVIPSSAAIGIHFYPIWEAASLDEWLYNGGPYQLVVLHFLTGVACYIGREWELSYRLGMRPWISVAFTAPVAAAAAVFLVYPIGQGSFSDGMPLGISGTFNFMLVFQAEHNILMHPFHQLGVAGVFGGSLFSAMHGSLVTSSLIRETSENESANYGYKFGQEEETYNIVAAHGYFGRLIFQYASFNNSRSLHFFLGLWPVVGIWLTALSVSTMAFNLNGFNFNQSVVDSQGRVINTWADIINRANLGMEVMHERNAHNFPLDLASGESLPVALTAPAVNG.

3 consecutive transmembrane segments (helical) span residues 29–46, 118–133, and 142–156; these read YIGW…TATS, HFLT…EWEL, and WISV…AAAA. Histidine 118 contributes to the chlorophyll a binding site. Tyrosine 126 provides a ligand contact to pheophytin a. [CaMn4O5] cluster contacts are provided by aspartate 170 and glutamate 189. Residues 197–218 form a helical membrane-spanning segment; sequence FHQLGVAGVFGGSLFSAMHGSL. Histidine 198 is a binding site for chlorophyll a. Residues histidine 215 and 264 to 265 contribute to the a quinone site; that span reads SF. Histidine 215 contacts Fe cation. Histidine 272 provides a ligand contact to Fe cation. Residues 274–288 traverse the membrane as a helical segment; the sequence is FLGLWPVVGIWLTAL. Residues histidine 332, glutamate 333, aspartate 342, and alanine 344 each coordinate [CaMn4O5] cluster. Positions 345–360 are excised as a propeptide; sequence SGESLPVALTAPAVNG.

It belongs to the reaction center PufL/M/PsbA/D family. As to quaternary structure, PSII is composed of 1 copy each of membrane proteins PsbA, PsbB, PsbC, PsbD, PsbE, PsbF, PsbH, PsbI, PsbJ, PsbK, PsbL, PsbM, PsbT, PsbX, PsbY, PsbZ, Psb30/Ycf12, at least 3 peripheral proteins of the oxygen-evolving complex and a large number of cofactors. It forms dimeric complexes. It depends on The D1/D2 heterodimer binds P680, chlorophylls that are the primary electron donor of PSII, and subsequent electron acceptors. It shares a non-heme iron and each subunit binds pheophytin, quinone, additional chlorophylls, carotenoids and lipids. D1 provides most of the ligands for the Mn4-Ca-O5 cluster of the oxygen-evolving complex (OEC). There is also a Cl(-1) ion associated with D1 and D2, which is required for oxygen evolution. The PSII complex binds additional chlorophylls, carotenoids and specific lipids. as a cofactor. Post-translationally, tyr-161 forms a radical intermediate that is referred to as redox-active TyrZ, YZ or Y-Z. In terms of processing, C-terminally processed by CTPA; processing is essential to allow assembly of the oxygen-evolving complex and thus photosynthetic growth.

It is found in the plastid. The protein resides in the chloroplast thylakoid membrane. It catalyses the reaction 2 a plastoquinone + 4 hnu + 2 H2O = 2 a plastoquinol + O2. Photosystem II (PSII) is a light-driven water:plastoquinone oxidoreductase that uses light energy to abstract electrons from H(2)O, generating O(2) and a proton gradient subsequently used for ATP formation. It consists of a core antenna complex that captures photons, and an electron transfer chain that converts photonic excitation into a charge separation. The D1/D2 (PsbA/PsbD) reaction center heterodimer binds P680, the primary electron donor of PSII as well as several subsequent electron acceptors. This chain is Photosystem II protein D1, found in Pyropia yezoensis (Susabi-nori).